The primary structure comprises 227 residues: N-acetyltransferase 8 (227 aa).

Residues 1–42 lie on the Cytoplasmic side of the membrane; it reads MAPCHIRKYQESDRQWVVGLLSRGMAEHAPATFRQLLKLPRT. Residues 43–63 form a helical; Signal-anchor for type II membrane protein membrane-spanning segment; that stretch reads LILLLGGPLALLLVSGSWLLA. Residues 61-220 enclose the N-acetyltransferase domain; the sequence is LLALVFSISL…HTVHFIYHLP (160 aa). At 64–227 the chain is on the lumenal side; the sequence is LVFSISLFPA…HLPSSKVGSL (164 aa).

This sequence belongs to the NAT8 family. In terms of tissue distribution, preferentially expressed in liver and kidney. Also detected in brain (at protein level).

It localises to the endoplasmic reticulum-Golgi intermediate compartment membrane. The protein localises to the endoplasmic reticulum membrane. It carries out the reaction L-lysyl-[protein] + acetyl-CoA = N(6)-acetyl-L-lysyl-[protein] + CoA + H(+). It catalyses the reaction an S-substituted L-cysteine + acetyl-CoA = an N-acetyl-L-cysteine-S-conjugate + CoA + H(+). It functions in the pathway sulfur metabolism; glutathione metabolism. Its function is as follows. Endoplasmic reticulum (ER)-membrane-bound lysine N-acetyltransferase catalyzing the N6-acetylation of lysine residues in the lumen of the ER in various proteins, including PROM1 and BACE1, using acetyl-CoA as acetyl donor. Thereby, may regulate apoptosis through the acetylation and the regulation of the expression of PROM1. May also regulate amyloid beta-peptide secretion through acetylation of BACE1 and the regulation of its expression in neurons. N(6)-lysine acetylation in the ER maintains protein homeostasis and regulates reticulophagy. Alternatively, acetylates the free alpha-amino group of cysteine S-conjugates to form mercapturic acids. This is the final step in a major route for detoxification of a wide variety of reactive electrophiles which starts with their incorporation into glutathione S-conjugates. The glutathione S-conjugates are then further processed into cysteine S-conjugates and finally mercapturic acids which are water soluble and can be readily excreted in urine or bile. The sequence is that of N-acetyltransferase 8 from Homo sapiens (Human).